We begin with the raw amino-acid sequence, 1482 residues long: Chromosome partition protein MukB (1482 aa).

34 to 41 contacts ATP; that stretch reads GGNGAGKS. Coiled coils occupy residues 326–416, 509–603, 780–805, 835–923, 979–1116, and 1210–1265; these read LEAD…AIQY, RHLA…RAPV, RAAR…ATLS, EAEI…AKLE, LSGN…AKAG, and EAIE…LQSV. The tract at residues 666–783 is flexible hinge; sequence PGGAEDSRLN…TLPLFGRAAR (118 aa).

It belongs to the SMC family. MukB subfamily. In terms of assembly, homodimerization via its hinge domain. Binds to DNA via its C-terminal region. Interacts, and probably forms a ternary complex, with MukE and MukF via its C-terminal region. The complex formation is stimulated by calcium or magnesium. Interacts with tubulin-related protein FtsZ.

It localises to the cytoplasm. Its subcellular location is the nucleoid. Its function is as follows. Plays a central role in chromosome condensation, segregation and cell cycle progression. Functions as a homodimer, which is essential for chromosome partition. Involved in negative DNA supercoiling in vivo, and by this means organize and compact chromosomes. May achieve or facilitate chromosome segregation by condensation DNA from both sides of a centrally located replisome during cell division. This chain is Chromosome partition protein MukB, found in Enterobacter sp. (strain 638).